A 40-amino-acid polypeptide reads, in one-letter code: Photosystem II reaction center protein J (40 aa).

Residues 8 to 28 (IPLWVIGTVAGIPVIGLIGIF) traverse the membrane as a helical segment.

It belongs to the PsbJ family. In terms of assembly, PSII is composed of 1 copy each of membrane proteins PsbA, PsbB, PsbC, PsbD, PsbE, PsbF, PsbH, PsbI, PsbJ, PsbK, PsbL, PsbM, PsbT, PsbX, PsbY, PsbZ, Psb30/Ycf12, at least 3 peripheral proteins of the oxygen-evolving complex and a large number of cofactors. It forms dimeric complexes.

It localises to the plastid. The protein localises to the chloroplast thylakoid membrane. One of the components of the core complex of photosystem II (PSII). PSII is a light-driven water:plastoquinone oxidoreductase that uses light energy to abstract electrons from H(2)O, generating O(2) and a proton gradient subsequently used for ATP formation. It consists of a core antenna complex that captures photons, and an electron transfer chain that converts photonic excitation into a charge separation. The polypeptide is Photosystem II reaction center protein J (Nasturtium officinale (Watercress)).